Reading from the N-terminus, the 561-residue chain is Transmembrane protein 209 (561 aa).

2 positions are modified to phosphoserine: S9 and S11. The chain crosses the membrane as a helical span at residues V28–T48. N57 carries N-linked (GlcNAc...) asparagine glycosylation. Residues Y60 to F80 traverse the membrane as a helical segment. Phosphoserine is present on S98. Disordered stretches follow at residues L120–T156 and S196–E233. Over residues S138 to P152 the composition is skewed to low complexity. Residues S201 and S248 each carry the phosphoserine modification. The segment at E250–P270 is disordered. Residues S260 to P270 are compositionally biased toward low complexity. An N-linked (GlcNAc...) asparagine glycan is attached at N274. Residue S278 is modified to Phosphoserine.

Interacts with NUP205.

It localises to the membrane. The protein localises to the nucleus envelope. Its subcellular location is the golgi apparatus. The protein resides in the cytoplasm. Nuclear envelope protein which in association with NUP205, may be involved in nuclear transport of various nuclear proteins in addition to MYC. In Rattus norvegicus (Rat), this protein is Transmembrane protein 209 (Tmem209).